Consider the following 623-residue polypeptide: Glucokinase regulatory protein (623 aa).

SIS domains lie at Val-90–Val-286 and Val-320–Phe-476. Residues Thr-109–Ser-110, Glu-153, and Ser-179–Gly-181 each bind beta-D-fructose 1-phosphate. Thr-109–Ser-110 serves as a coordination point for beta-D-fructose 6-phosphate. Beta-D-fructose 6-phosphate is bound at residue Ser-179–Gly-181. The interval Ala-199 to Val-200 is important for interaction with GCK. Glu-348 provides a ligand contact to beta-D-fructose 1-phosphate. The essential for interaction with GCK stretch occupies residues Leu-463–Phe-465.

It belongs to the GCKR family. Interacts (fructose 6-phosphate bound form) with GCK.

It is found in the cytoplasm. The protein resides in the nucleus. Its subcellular location is the mitochondrion. Functionally, regulates glucokinase (GCK) by forming an inactive complex with this enzyme. Acts by promoting GCK recruitment to the nucleus, possibly to provide a reserve of GCK that can be quickly released in the cytoplasm after a meal. The affinity of GCKR for GCK is modulated by fructose metabolites: GCKR with bound fructose 6-phosphate has increased affinity for GCK, while GCKR with bound fructose 1-phosphate has strongly decreased affinity for GCK and does not inhibit GCK activity. This chain is Glucokinase regulatory protein, found in Mus musculus (Mouse).